Reading from the N-terminus, the 224-residue chain is MLTRAPRRLVQGPRETWLLGGLWVWILCGLGMAGSPGTPQPCQAPQQWEGRQVLYQQSSGHNSRALVSYDGLNQRVRVLDERKALIPCKRLFEYILLYKDGVMFQIEQATKLCAKIPLAEPWDPLDIPQNSTFEDQYSIGGPQEQIMVQEWSDRRTARSYETWIGVYTAKDCYPVQETFIRNYTVVLSTRFFDVQLGIKDPSVFTPPSTCQTAQPEKMKENCSL.

A signal peptide spans 1–37 (MLTRAPRRLVQGPRETWLLGGLWVWILCGLGMAGSPG). 3 disulfides stabilise this stretch: C42/C172, C88/C222, and C113/C210. Residues N130 and N182 are each glycosylated (N-linked (GlcNAc...) asparagine).

It belongs to the ependymin family. In terms of assembly, homodimer. In terms of processing, N-glycosylated; the glycan contains mannose-6-phosphate moieties. In terms of tissue distribution, detected in brain (at protein level).

It is found in the lysosome lumen. Its subcellular location is the secreted. In terms of biological role, binds anionic lipids and gangliosides at acidic pH. In Rattus norvegicus (Rat), this protein is Mammalian ependymin-related protein 1 (Epdr1).